The chain runs to 436 residues: D-amino acid dehydrogenase (436 aa).

An FAD-binding site is contributed by 3-17; it reads ILILGSGVIGVTSAW.

Belongs to the DadA oxidoreductase family. FAD is required as a cofactor.

The enzyme catalyses a D-alpha-amino acid + A + H2O = a 2-oxocarboxylate + AH2 + NH4(+). The protein operates within amino-acid degradation; D-alanine degradation; NH(3) and pyruvate from D-alanine: step 1/1. In terms of biological role, oxidative deamination of D-amino acids. This Photorhabdus laumondii subsp. laumondii (strain DSM 15139 / CIP 105565 / TT01) (Photorhabdus luminescens subsp. laumondii) protein is D-amino acid dehydrogenase.